A 244-amino-acid polypeptide reads, in one-letter code: Putative nucleosome assembly protein C36B7.08c (244 aa).

The segment at 199–244 (EAMTEEASDEDESVDLEEDEEEEDEEDEEGDEEKQEPPSKKSKKSN) is disordered. Acidic residues predominate over residues 201-232 (MTEEASDEDESVDLEEDEEEEDEEDEEGDEEK). At Ser-211 the chain carries Phosphoserine.

The protein belongs to the nucleosome assembly protein (NAP) family.

It localises to the nucleus. The protein is Putative nucleosome assembly protein C36B7.08c of Schizosaccharomyces pombe (strain 972 / ATCC 24843) (Fission yeast).